Consider the following 228-residue polypeptide: 2-C-methyl-D-erythritol 4-phosphate cytidylyltransferase (228 aa).

This sequence belongs to the IspD/TarI cytidylyltransferase family. IspD subfamily.

The enzyme catalyses 2-C-methyl-D-erythritol 4-phosphate + CTP + H(+) = 4-CDP-2-C-methyl-D-erythritol + diphosphate. The protein operates within isoprenoid biosynthesis; isopentenyl diphosphate biosynthesis via DXP pathway; isopentenyl diphosphate from 1-deoxy-D-xylulose 5-phosphate: step 2/6. Catalyzes the formation of 4-diphosphocytidyl-2-C-methyl-D-erythritol from CTP and 2-C-methyl-D-erythritol 4-phosphate (MEP). This Crocosphaera subtropica (strain ATCC 51142 / BH68) (Cyanothece sp. (strain ATCC 51142)) protein is 2-C-methyl-D-erythritol 4-phosphate cytidylyltransferase.